Here is a 472-residue protein sequence, read N- to C-terminus: Membrane-bound lytic murein transglycosylase F (472 aa).

The signal sequence occupies residues 1 to 24 (MRLLVIFLLALLLMACKEAPKPLA). Residues 25–259 (DPRTTKEIIV…HLIDRYYGHA (235 aa)) form a non-LT domain region. Residues 260 to 472 (DRLKPVDVTT…NGFGNTLSQE (213 aa)) form an LT domain region. E306 is a catalytic residue.

The protein in the N-terminal section; belongs to the bacterial solute-binding protein 3 family. It in the C-terminal section; belongs to the transglycosylase Slt family.

It is found in the cell outer membrane. The catalysed reaction is Exolytic cleavage of the (1-&gt;4)-beta-glycosidic linkage between N-acetylmuramic acid (MurNAc) and N-acetylglucosamine (GlcNAc) residues in peptidoglycan, from either the reducing or the non-reducing ends of the peptidoglycan chains, with concomitant formation of a 1,6-anhydrobond in the MurNAc residue.. In terms of biological role, murein-degrading enzyme that degrades murein glycan strands and insoluble, high-molecular weight murein sacculi, with the concomitant formation of a 1,6-anhydromuramoyl product. Lytic transglycosylases (LTs) play an integral role in the metabolism of the peptidoglycan (PG) sacculus. Their lytic action creates space within the PG sacculus to allow for its expansion as well as for the insertion of various structures such as secretion systems and flagella. The chain is Membrane-bound lytic murein transglycosylase F from Methylobacillus flagellatus (strain ATCC 51484 / DSM 6875 / VKM B-1610 / KT).